Reading from the N-terminus, the 201-residue chain is Diadenylate cyclase CdaS (201 aa).

A DAC domain is found at 54 to 201 (QTLAATYYIQ…LNGILYTISL (148 aa)).

This sequence belongs to the adenylate cyclase family. DacB/CdaS subfamily. Probably forms a homohexamer. Mg(2+) is required as a cofactor.

It catalyses the reaction 2 ATP = 3',3'-c-di-AMP + 2 diphosphate. One of 3 paralogous diadenylate cyclases (DAC) in this bacteria catalyzing the condensation of 2 ATP molecules into cyclic di-AMP (c-di-AMP). It has slow DAC activity with ADP as a substrate and may have weak ADPase activity. Required for efficient spore formation, whereas in B.subtilis, it is required for efficient spore germination. It is produced under the control of different sigma factors in the two bacteria. It is also required for parasporal crystal formation. The sequence is that of Diadenylate cyclase CdaS from Bacillus thuringiensis (strain BMB171).